A 291-amino-acid polypeptide reads, in one-letter code: Elongation factor Ts (291 aa).

The involved in Mg(2+) ion dislocation from EF-Tu stretch occupies residues 79-82 (TDFV).

The protein belongs to the EF-Ts family.

The protein localises to the cytoplasm. In terms of biological role, associates with the EF-Tu.GDP complex and induces the exchange of GDP to GTP. It remains bound to the aminoacyl-tRNA.EF-Tu.GTP complex up to the GTP hydrolysis stage on the ribosome. The polypeptide is Elongation factor Ts (Ruegeria sp. (strain TM1040) (Silicibacter sp.)).